Reading from the N-terminus, the 224-residue chain is Ribosomal RNA large subunit methyltransferase E (224 aa).

Residues G64, W66, D97, D113, and D138 each contribute to the S-adenosyl-L-methionine site. K178 functions as the Proton acceptor in the catalytic mechanism.

The protein belongs to the class I-like SAM-binding methyltransferase superfamily. RNA methyltransferase RlmE family.

It is found in the cytoplasm. It catalyses the reaction uridine(2552) in 23S rRNA + S-adenosyl-L-methionine = 2'-O-methyluridine(2552) in 23S rRNA + S-adenosyl-L-homocysteine + H(+). Its function is as follows. Specifically methylates the uridine in position 2552 of 23S rRNA at the 2'-O position of the ribose in the fully assembled 50S ribosomal subunit. The chain is Ribosomal RNA large subunit methyltransferase E from Albidiferax ferrireducens (strain ATCC BAA-621 / DSM 15236 / T118) (Rhodoferax ferrireducens).